Consider the following 330-residue polypeptide: Ribosomal RNA small subunit methyltransferase H (330 aa).

Residues 35 to 37, Asp-53, Phe-80, Asp-101, and Gln-108 each bind S-adenosyl-L-methionine; that span reads GGY.

It belongs to the methyltransferase superfamily. RsmH family.

The protein localises to the cytoplasm. The enzyme catalyses cytidine(1402) in 16S rRNA + S-adenosyl-L-methionine = N(4)-methylcytidine(1402) in 16S rRNA + S-adenosyl-L-homocysteine + H(+). Functionally, specifically methylates the N4 position of cytidine in position 1402 (C1402) of 16S rRNA. This is Ribosomal RNA small subunit methyltransferase H from Rhodopseudomonas palustris (strain BisB18).